We begin with the raw amino-acid sequence, 178 residues long: Ribosome maturation factor RimP (178 aa).

Belongs to the RimP family.

It localises to the cytoplasm. Required for maturation of 30S ribosomal subunits. This chain is Ribosome maturation factor RimP, found in Corynebacterium glutamicum (strain ATCC 13032 / DSM 20300 / JCM 1318 / BCRC 11384 / CCUG 27702 / LMG 3730 / NBRC 12168 / NCIMB 10025 / NRRL B-2784 / 534).